A 489-amino-acid polypeptide reads, in one-letter code: Homoserine O-acetyltransferase (489 aa).

An AB hydrolase-1 domain is found at 63-435 (NALVICHALS…SPEGHDAFLL (373 aa)). The active site involves S162. Catalysis depends on S162, which acts as the Nucleophile. Residues 247 to 272 (RFGRNVPDPSKRQNINGTERLPTPPN) form a disordered region. Residues D401 and H430 contribute to the active site.

The protein belongs to the AB hydrolase superfamily. MetX family.

It catalyses the reaction L-homoserine + acetyl-CoA = O-acetyl-L-homoserine + CoA. The protein operates within amino-acid biosynthesis; L-methionine biosynthesis via de novo pathway; O-acetyl-L-homoserine from L-homoserine: step 1/1. Its function is as follows. Commits homoserine to the methionine biosynthesis pathway by catalyzing its O-acetylation. This chain is Homoserine O-acetyltransferase (metE), found in Emericella nidulans (strain FGSC A4 / ATCC 38163 / CBS 112.46 / NRRL 194 / M139) (Aspergillus nidulans).